The following is a 215-amino-acid chain: Beta-crystallin A3 (215 aa).

At methionine 1 the chain carries N-acetylmethionine. A compositionally biased stretch (low complexity) spans 1 to 16 (METQAEQQELETLPTT). The disordered stretch occupies residues 1-29 (METQAEQQELETLPTTKMAQTNPTPGSLG). The N-terminal arm stretch occupies residues 1-30 (METQAEQQELETLPTTKMAQTNPTPGSLGP). Glutamate 2 carries the post-translational modification N-acetylalanine. Beta/gamma crystallin 'Greek key' domains follow at residues 31 to 70 (WKIT…KVES) and 71 to 117 (GAWI…RPIC). Residues cysteine 82 and cysteine 117 each carry the S-glutathionyl cysteine; alternate modification. S-methylcysteine; alternate occurs at positions 82 and 117. The segment at 118-123 (SANHKE) is connecting peptide. Beta/gamma crystallin 'Greek key' domains follow at residues 124 to 165 (SKMT…KIQS) and 166 to 214 (GAWV…RRIQ). Residue cysteine 185 is modified to S-methylcysteine.

This sequence belongs to the beta/gamma-crystallin family. Homo/heterodimer, or complexes of higher-order. The structure of beta-crystallin oligomers seems to be stabilized through interactions between the N-terminal arms. Interacts with CRYBA1. Specific cleavages in the N-terminal arm occur during lens maturation and give rise to several truncated forms. Cleavages do not seem to have adverse effects on solubility. Post-translationally, S-methylation and glutathionylation occur in normal young lenses and do not seem to be detrimental.

In terms of biological role, crystallins are the dominant structural components of the vertebrate eye lens. The sequence is that of Beta-crystallin A3 from Homo sapiens (Human).